The chain runs to 844 residues: Protein translocase subunit SecA (844 aa).

Residues glutamine 89, 107 to 111, and aspartate 497 contribute to the ATP site; that span reads GEGKT. The Zn(2+) site is built by cysteine 829, cysteine 831, cysteine 840, and histidine 841.

This sequence belongs to the SecA family. In terms of assembly, monomer and homodimer. Part of the essential Sec protein translocation apparatus which comprises SecA, SecYEG and auxiliary proteins SecDF. Other proteins may also be involved. Requires Zn(2+) as cofactor.

The protein localises to the cell membrane. Its subcellular location is the cytoplasm. It catalyses the reaction ATP + H2O + cellular proteinSide 1 = ADP + phosphate + cellular proteinSide 2.. Its function is as follows. Part of the Sec protein translocase complex. Interacts with the SecYEG preprotein conducting channel. Has a central role in coupling the hydrolysis of ATP to the transfer of proteins into and across the cell membrane, serving as an ATP-driven molecular motor driving the stepwise translocation of polypeptide chains across the membrane. In Streptococcus suis (strain 98HAH33), this protein is Protein translocase subunit SecA.